A 345-amino-acid chain; its full sequence is Inositol phosphoceramide mannosyltransferase 2 (345 aa).

Residues 4–24 traverse the membrane as a helical segment; it reads VIYKFAVFAAVNFFLMSSIVL. Asn55 carries N-linked (GlcNAc...) asparagine glycosylation. The helical transmembrane segment at 220–240 threads the bilayer; the sequence is YWLPYLTIMLSTGPLSISFLW. Asn269 is a glycosylation site (N-linked (GlcNAc...) asparagine). The helical transmembrane segment at 296 to 316 threads the bilayer; sequence LAYVIVAGFCLYFILSYMFFS.

It belongs to the glycosyltransferase 32 family.

The protein localises to the golgi apparatus. It localises to the cis-Golgi network membrane. The protein resides in the trans-Golgi network membrane. Functionally, with imt1 and imt3, is required for the synthesis of mannosyl phosphorylinositol ceramide (MIPC). Catalyzes the addition of mannosyl to phosphorylinositol ceramide (IPC). MIPC is essential for cell morphology, cell-surface distribution of ergosterol, localization for plasma-membrane transporters, and lipid-raft-mediated endocytosis of plasma membrane proteins to the vacuole. The sequence is that of Inositol phosphoceramide mannosyltransferase 2 from Schizosaccharomyces pombe (strain 972 / ATCC 24843) (Fission yeast).